We begin with the raw amino-acid sequence, 200 residues long: Dephospho-CoA kinase (200 aa).

Positions 4-200 constitute a DPCK domain; the sequence is VIGLTGGIAS…VILKNWNIID (197 aa). Residue 12–17 participates in ATP binding; that stretch reads ASGKST.

Belongs to the CoaE family.

It is found in the cytoplasm. It carries out the reaction 3'-dephospho-CoA + ATP = ADP + CoA + H(+). It participates in cofactor biosynthesis; coenzyme A biosynthesis; CoA from (R)-pantothenate: step 5/5. Catalyzes the phosphorylation of the 3'-hydroxyl group of dephosphocoenzyme A to form coenzyme A. This chain is Dephospho-CoA kinase, found in Bacillus cereus (strain ATCC 10987 / NRS 248).